The sequence spans 259 residues: Deoxyribose-phosphate aldolase (259 aa).

Aspartate 102 functions as the Proton donor/acceptor in the catalytic mechanism. Lysine 167 acts as the Schiff-base intermediate with acetaldehyde in catalysis. The active-site Proton donor/acceptor is lysine 201.

Belongs to the DeoC/FbaB aldolase family. DeoC type 2 subfamily.

Its subcellular location is the cytoplasm. It catalyses the reaction 2-deoxy-D-ribose 5-phosphate = D-glyceraldehyde 3-phosphate + acetaldehyde. It participates in carbohydrate degradation; 2-deoxy-D-ribose 1-phosphate degradation; D-glyceraldehyde 3-phosphate and acetaldehyde from 2-deoxy-alpha-D-ribose 1-phosphate: step 2/2. Catalyzes a reversible aldol reaction between acetaldehyde and D-glyceraldehyde 3-phosphate to generate 2-deoxy-D-ribose 5-phosphate. The chain is Deoxyribose-phosphate aldolase from Escherichia fergusonii (strain ATCC 35469 / DSM 13698 / CCUG 18766 / IAM 14443 / JCM 21226 / LMG 7866 / NBRC 102419 / NCTC 12128 / CDC 0568-73).